We begin with the raw amino-acid sequence, 248 residues long: 2,3-bisphosphoglycerate-dependent phosphoglycerate mutase (248 aa).

Substrate-binding positions include 10 to 17 (RHGQSQWN), 23 to 24 (TG), Arg62, 89 to 92 (ERHY), Lys100, 116 to 117 (RR), and 183 to 184 (GN). His11 (tele-phosphohistidine intermediate) is an active-site residue. Residue Glu89 is the Proton donor/acceptor of the active site.

This sequence belongs to the phosphoglycerate mutase family. BPG-dependent PGAM subfamily.

It catalyses the reaction (2R)-2-phosphoglycerate = (2R)-3-phosphoglycerate. The protein operates within carbohydrate degradation; glycolysis; pyruvate from D-glyceraldehyde 3-phosphate: step 3/5. Catalyzes the interconversion of 2-phosphoglycerate and 3-phosphoglycerate. The protein is 2,3-bisphosphoglycerate-dependent phosphoglycerate mutase of Corynebacterium kroppenstedtii (strain DSM 44385 / JCM 11950 / CIP 105744 / CCUG 35717).